The following is a 271-amino-acid chain: NTNNTIEEQLSTLEKYSQGRLGVALINTEDNSQITYRGEERFAMASTSKVMAVAAILKESEKQAGLLDKNIIITKSDLVAYSPITEKHLATGMSLAQLSAATLQYSDNTAMNKILDYLGGPSKVTQFARSINDVTYRLDRKEPELNTAIHGDPRDTTSPIAMAKSLQALTLGDALGQSQRQQLVTWLKGNTTGDHSIKAGLPKHWIVGDKTGSGDYGTTNDIAVIWPKNHAPLILVVYFTQQEQDAKYRKDIIVKATEIVTKEFSNTSQKK.

Residue S46 is the Acyl-ester intermediate of the active site. 210-212 (KTG) serves as a coordination point for substrate.

It belongs to the class-A beta-lactamase family. As to quaternary structure, monomer.

The catalysed reaction is a beta-lactam + H2O = a substituted beta-amino acid. Functionally, hydrolyzes broad-spectrum beta-lactam antibiotics. Active against cephalosporins. The polypeptide is Beta-lactamase (Proteus vulgaris).